We begin with the raw amino-acid sequence, 77 residues long: Dermatoxin-DA1 (77 aa).

The signal sequence occupies residues Met1–Cys22. Positions Glu23–Glu42 are excised as a propeptide. A Lysine amide modification is found at Lys76.

The protein belongs to the frog skin active peptide (FSAP) family. Dermatoxin subfamily. As to expression, expressed by the skin glands.

It localises to the secreted. Its function is as follows. Possesses a potent antimicrobial activity against Gram-positive and Gram-negative bacteria. Probably acts by disturbing membrane functions with its amphipathic structure. The sequence is that of Dermatoxin-DA1 from Agalychnis dacnicolor (Giant Mexican leaf frog).